The sequence spans 84 residues: uncharacterized protein (84 aa).

Residues 5 to 31 (KIQEIINELDNLMNRERKYIELVATVE) are a coiled coil.

This is an uncharacterized protein from Methanocaldococcus jannaschii (strain ATCC 43067 / DSM 2661 / JAL-1 / JCM 10045 / NBRC 100440) (Methanococcus jannaschii).